Here is a 590-residue protein sequence, read N- to C-terminus: Asparagine synthetase [glutamine-hydrolyzing] (590 aa).

Residue C2 is the For GATase activity of the active site. A Glutamine amidotransferase type-2 domain is found at 2-185 (CGILAVLGCS…PGNLYSSRSG (184 aa)). L-glutamine is bound by residues 50-54 (RLAII), 75-77 (NGE), and D98. Positions 193-516 (PQWYNETIPS…PQNSARFTVP (324 aa)) constitute an Asparagine synthetase domain. ATP-binding positions include L231, V267, and 341 to 342 (SG).

It catalyses the reaction L-aspartate + L-glutamine + ATP + H2O = L-asparagine + L-glutamate + AMP + diphosphate + H(+). It functions in the pathway amino-acid biosynthesis; L-asparagine biosynthesis; L-asparagine from L-aspartate (L-Gln route): step 1/1. This Asparagus officinalis (Garden asparagus) protein is Asparagine synthetase [glutamine-hydrolyzing].